Here is a 622-residue protein sequence, read N- to C-terminus: ATP-dependent lipid A-core flippase (622 aa).

5 helical membrane-spanning segments follow: residues 32–52 (IVAA…LAAF), 91–111 (VWGT…LVVI), 192–212 (IVLL…FPLL), 286–306 (SPFS…IALW), and 312–332 (YTTI…YAPI). In terms of domain architecture, ABC transmembrane type-1 spans 33–344 (VAALIAIFGV…LANISIPMQT (312 aa)). An ABC transporter domain is found at 378–611 (FRNVDVEYRS…NGYYTMLRNI (234 aa)). ATP is bound at residue 410–417 (GRSGSGKS).

This sequence belongs to the ABC transporter superfamily. Lipid exporter (TC 3.A.1.106) family. Homodimer.

It localises to the cell inner membrane. The enzyme catalyses ATP + H2O + lipid A-core oligosaccharideSide 1 = ADP + phosphate + lipid A-core oligosaccharideSide 2.. Functionally, involved in lipopolysaccharide (LPS) biosynthesis. Translocates lipid A-core from the inner to the outer leaflet of the inner membrane. Transmembrane domains (TMD) form a pore in the inner membrane and the ATP-binding domain (NBD) is responsible for energy generation. This is ATP-dependent lipid A-core flippase from Neisseria gonorrhoeae (strain ATCC 700825 / FA 1090).